Here is a 91-residue protein sequence, read N- to C-terminus: Apolipoprotein C-III (91 aa).

Positions 1-20 are cleaved as a signal peptide; the sequence is MQPRVLLAVTLLALLVSARA. M63 is modified (methionine sulfoxide). A lipid-binding region spans residues 68–91; it reads DSMKGYWTSLIGRLSGFLDSTPSS.

The protein belongs to the apolipoprotein C3 family.

It localises to the secreted. In terms of biological role, component of triglyceride-rich very low density lipoproteins (VLDL) and high density lipoproteins (HDL) in plasma. Plays a multifaceted role in triglyceride homeostasis. Intracellularly, promotes hepatic very low density lipoprotein 1 (VLDL1) assembly and secretion; extracellularly, attenuates hydrolysis and clearance of triglyceride-rich lipoproteins (TRLs). Impairs the lipolysis of TRLs by inhibiting lipoprotein lipase and the hepatic uptake of TRLs by remnant receptors. Formed of several curved helices connected via semiflexible hinges, so that it can wrap tightly around the curved micelle surface and easily adapt to the different diameters of its natural binding partners. This Cavia porcellus (Guinea pig) protein is Apolipoprotein C-III (APOC3).